Reading from the N-terminus, the 154-residue chain is uncharacterized protein (154 aa).

The next 2 helical transmembrane spans lie at 19-39 and 51-71; these read LFAYAAAFLIAVAHVAGGLLL and ADQVAMGALGLVLAGAVLLFA.

The protein localises to the cell membrane. This is an uncharacterized protein from Mycobacterium tuberculosis (strain CDC 1551 / Oshkosh).